The following is a 524-amino-acid chain: Tyrosine-protein kinase HCK (524 aa).

Residues 1 to 72 are disordered; that stretch reads MGGRSSCEDP…NNSNSMPPGF (72 aa). Residue Gly2 is the site of N-myristoyl glycine attachment. The S-palmitoyl cysteine moiety is linked to residue Gly3. The segment covering 29 to 38 has biased composition (basic and acidic residues); that stretch reads FLRDGSKASK. Position 50 is a phosphotyrosine; by autocatalysis (Tyr50). Positions 54 to 68 are enriched in polar residues; it reads PTSSSKLGPNNSNSM. The region spanning 76 to 136 is the SH3 domain; sequence SEDTIVVALY…PSNYVARVNS (61 aa). The region spanning 142–239 is the SH2 domain; sequence WFFKGISRKD…GLCQKLSVPC (98 aa). Residue Thr200 is modified to Phosphothreonine. At Tyr207 the chain carries Phosphotyrosine. The 254-residue stretch at 260–513 folds into the Protein kinase domain; that stretch reads LQMEKKLGAG…YIQSVLDDFY (254 aa). ATP-binding positions include 266 to 274 and Lys288; that span reads LGAGQFGEV. Asp379 serves as the catalytic Proton acceptor. At Tyr409 the chain carries Phosphotyrosine; by autocatalysis. Ser460 is modified (phosphoserine). The residue at position 520 (Tyr520) is a Phosphotyrosine.

This sequence belongs to the protein kinase superfamily. Tyr protein kinase family. SRC subfamily. As to quaternary structure, interacts with ADAM15. Interacts with FASLG. Interacts with ARRB1 and ARRB2. Interacts with FCGR1A; the interaction may be indirect. Interacts with IL6ST. Interacts (via SH3 domain) with ELMO1. Interacts (via SH3 domain) with TP73. Interacts with YAP1. Interacts with ABL1 and ITGB1, and thereby recruits ABL1 to activated ITGB1. Interacts (via SH2 domain) with FLT3 (tyrosine phosphorylated). Interacts with CBL. Interacts with VAV1, WAS and RAPGEF1. Interacts (via SH3 domain) with WDCP. Post-translationally, phosphorylated on several tyrosine residues. Autophosphorylated. Becomes rapidly phosphorylated upon activation of the immunoglobulin receptors FCGR1A and FCGR2A. Phosphorylation at Tyr-409 increases kinase activity. Phosphorylation at Tyr-520 inhibits kinase activity. Kinase activity is not required for phosphorylation at Tyr-520, suggesting that this site may be a target of other kinases. In terms of processing, ubiquitinated by CBL, leading to its degradation via the proteasome. Isoform 2 palmitoylation at position 2 requires prior myristoylation. Palmitoylation at position 3 is required for caveolar localization of isoform 2. As to expression, expressed predominantly in cells of the myeloid and B-lymphoid lineages.

Its subcellular location is the cytoplasmic vesicle. It is found in the secretory vesicle. The protein localises to the cytoplasm. It localises to the cytosol. The protein resides in the membrane. Its subcellular location is the caveola. It is found in the lysosome. The protein localises to the cell projection. It localises to the podosome membrane. The protein resides in the cell membrane. Its subcellular location is the cell junction. It is found in the focal adhesion. The protein localises to the cytoskeleton. It localises to the golgi apparatus. The protein resides in the nucleus. It catalyses the reaction L-tyrosyl-[protein] + ATP = O-phospho-L-tyrosyl-[protein] + ADP + H(+). Subject to autoinhibition, mediated by intramolecular interactions involving the SH2 and SH3 domains. Kinase activity is also regulated by phosphorylation at regulatory tyrosine residues. Phosphorylation at Tyr-409 is required for optimal activity. Phosphorylation at Tyr-520 inhibits kinase activity. Inhibited by PP1. Non-receptor tyrosine-protein kinase found in hematopoietic cells that transmits signals from cell surface receptors and plays an important role in the regulation of innate immune responses, including neutrophil, monocyte, macrophage and mast cell functions, phagocytosis, cell survival and proliferation, cell adhesion and migration. Acts downstream of receptors that bind the Fc region of immunoglobulins, such as FCGR1A and FCGR2A, but also CSF3R, PLAUR, the receptors for IFNG, IL2, IL6 and IL8, and integrins, such as ITGB1 and ITGB2. During the phagocytic process, mediates mobilization of secretory lysosomes, degranulation, and activation of NADPH oxidase to bring about the respiratory burst. Plays a role in the release of inflammatory molecules. Promotes reorganization of the actin cytoskeleton and actin polymerization, formation of podosomes and cell protrusions. Inhibits TP73-mediated transcription activation and TP73-mediated apoptosis. Phosphorylates CBL in response to activation of immunoglobulin gamma Fc region receptors. Phosphorylates ADAM15, BCR, ELMO1, FCGR2A, GAB1, GAB2, RAPGEF1, STAT5B, TP73, VAV1 and WAS. The protein is Tyrosine-protein kinase HCK (Hck) of Mus musculus (Mouse).